The primary structure comprises 205 residues: Probable GTP-binding protein EngB (205 aa).

Residues 29 to 203 (QGAEIAFIGR…KAVLSQWFSS (175 aa)) form the EngB-type G domain. Residues 37–44 (GRSNAGKS), 64–68 (GRTQM), 82–85 (DLPG), 149–152 (TKSD), and 182–184 (FSS) contribute to the GTP site. The Mg(2+) site is built by Ser-44 and Thr-66.

It belongs to the TRAFAC class TrmE-Era-EngA-EngB-Septin-like GTPase superfamily. EngB GTPase family. Mg(2+) is required as a cofactor.

Functionally, necessary for normal cell division and for the maintenance of normal septation. The polypeptide is Probable GTP-binding protein EngB (Coxiella burnetii (strain CbuK_Q154) (Coxiella burnetii (strain Q154))).